A 643-amino-acid polypeptide reads, in one-letter code: Inorganic pyrophosphatase TTM1 (643 aa).

Residues Met-1–His-15 constitute a mitochondrion transit peptide. The 163-residue stretch at Asn-248–Leu-410 folds into the CYTH domain. Residues Leu-618–Ala-638 traverse the membrane as a helical segment.

Mg(2+) serves as cofactor. As to expression, ubiquitously expressed in all tissues, with strong expression detected in senescent leaves.

The protein resides in the mitochondrion outer membrane. The enzyme catalyses diphosphate + H2O = 2 phosphate + H(+). Exhibits pyrophosphatase activity with stronger affinity for pyrophosphate (PPi), moderate affinity for ATP and ADP, and weak affinity for tripolyphosphate (PPPi). No activity observed toward uridine substrate. Positively regulates natural and dark-induced leaf senescence. This chain is Inorganic pyrophosphatase TTM1, found in Arabidopsis thaliana (Mouse-ear cress).